Reading from the N-terminus, the 80-residue chain is Pancreatic polypeptide (80 aa).

The first 25 residues, 1 to 25 (MPPRWASLLLLACSLLLLAVPPGTA), serve as a signal peptide directing secretion. Tyr-61 carries the tyrosine amide modification. The propeptide occupies 65–80 (SSSRVLCEEPMGAAGC).

Belongs to the NPY family.

The protein localises to the secreted. Hormone secreted by pancreatic cells that acts as a regulator of pancreatic and gastrointestinal functions. The protein is Pancreatic polypeptide (PPY) of Gallus gallus (Chicken).